The primary structure comprises 275 residues: Polyamine aminopropyltransferase (275 aa).

Residues 2 to 235 (EFWFTEKQTE…GMWTFTIGSK (234 aa)) enclose the PABS domain. An S-methyl-5'-thioadenosine-binding site is contributed by Gln-31. Spermidine contacts are provided by His-62 and Asp-86. S-methyl-5'-thioadenosine contacts are provided by residues Asp-106 and 137–138 (DG). Asp-155 acts as the Proton acceptor in catalysis. Residue 155–158 (DSTE) participates in spermidine binding. An S-methyl-5'-thioadenosine-binding site is contributed by Pro-162.

Belongs to the spermidine/spermine synthase family. As to quaternary structure, homodimer or homotetramer.

The protein localises to the cytoplasm. It carries out the reaction S-adenosyl 3-(methylsulfanyl)propylamine + putrescine = S-methyl-5'-thioadenosine + spermidine + H(+). Its pathway is amine and polyamine biosynthesis; spermidine biosynthesis; spermidine from putrescine: step 1/1. Functionally, catalyzes the irreversible transfer of a propylamine group from the amino donor S-adenosylmethioninamine (decarboxy-AdoMet) to putrescine (1,4-diaminobutane) to yield spermidine. The sequence is that of Polyamine aminopropyltransferase from Shouchella clausii (strain KSM-K16) (Alkalihalobacillus clausii).